We begin with the raw amino-acid sequence, 96 residues long: Uteroglobin (96 aa).

An N-terminal signal peptide occupies residues 1–21 (MKIAITITVVMLSICCSSASS).

This sequence belongs to the secretoglobin family. Antiparallel homodimer; disulfide-linked. Interaction with LMBR1L is controversial. Club cells (nonciliated cells of the surface epithelium of the pulmonary airways).

It is found in the secreted. Its function is as follows. Binds phosphatidylcholine, phosphatidylinositol, polychlorinated biphenyls (PCB) and weakly progesterone, potent inhibitor of phospholipase A2. This is Uteroglobin (Scgb1a1) from Mus musculus (Mouse).